The chain runs to 117 residues: Prefoldin subunit beta (117 aa).

The protein belongs to the prefoldin subunit beta family. As to quaternary structure, heterohexamer of two alpha and four beta subunits.

The protein resides in the cytoplasm. Its function is as follows. Molecular chaperone capable of stabilizing a range of proteins. Seems to fulfill an ATP-independent, HSP70-like function in archaeal de novo protein folding. The chain is Prefoldin subunit beta from Methanosarcina mazei (strain ATCC BAA-159 / DSM 3647 / Goe1 / Go1 / JCM 11833 / OCM 88) (Methanosarcina frisia).